The following is a 323-amino-acid chain: Methionyl-tRNA formyltransferase (323 aa).

117-120 (SLLP) lines the (6S)-5,6,7,8-tetrahydrofolate pocket.

Belongs to the Fmt family.

It carries out the reaction L-methionyl-tRNA(fMet) + (6R)-10-formyltetrahydrofolate = N-formyl-L-methionyl-tRNA(fMet) + (6S)-5,6,7,8-tetrahydrofolate + H(+). In terms of biological role, attaches a formyl group to the free amino group of methionyl-tRNA(fMet). The formyl group appears to play a dual role in the initiator identity of N-formylmethionyl-tRNA by promoting its recognition by IF2 and preventing the misappropriation of this tRNA by the elongation apparatus. The polypeptide is Methionyl-tRNA formyltransferase (Acidovorax ebreus (strain TPSY) (Diaphorobacter sp. (strain TPSY))).